Here is a 200-residue protein sequence, read N- to C-terminus: dITP/XTP pyrophosphatase (200 aa).

Position 8–13 (8–13 (TGNQGK)) interacts with substrate. Residue D69 is the Proton acceptor of the active site. D69 is a Mg(2+) binding site. Substrate is bound by residues S70, 154 to 157 (FGYD), K177, and 182 to 183 (HR).

This sequence belongs to the HAM1 NTPase family. As to quaternary structure, homodimer. The cofactor is Mg(2+).

It catalyses the reaction XTP + H2O = XMP + diphosphate + H(+). The enzyme catalyses dITP + H2O = dIMP + diphosphate + H(+). It carries out the reaction ITP + H2O = IMP + diphosphate + H(+). In terms of biological role, pyrophosphatase that catalyzes the hydrolysis of nucleoside triphosphates to their monophosphate derivatives, with a high preference for the non-canonical purine nucleotides XTP (xanthosine triphosphate), dITP (deoxyinosine triphosphate) and ITP. Seems to function as a house-cleaning enzyme that removes non-canonical purine nucleotides from the nucleotide pool, thus preventing their incorporation into DNA/RNA and avoiding chromosomal lesions. The sequence is that of dITP/XTP pyrophosphatase from Vibrio parahaemolyticus serotype O3:K6 (strain RIMD 2210633).